The sequence spans 217 residues: Phosphatidylcholine synthase (217 aa).

The helical transmembrane segment at 1–8 (ACIGVFSL) threads the bilayer. The Periplasmic portion of the chain corresponds to 9-16 (VKIYQHEY). The chain crosses the membrane as a helical span at residues 17–37 (IFALWLMFITVVIDAVDGTLA). Residues 38–50 (RLVNIKKILPKID) are Cytoplasmic-facing. The chain crosses the membrane as a helical span at residues 51–71 (GALLDNIVDYLNYVITPCFFL). Residues 72–77 (LVKPGM) lie on the Periplasmic side of the membrane. A helical membrane pass occupies residues 78–98 (LPPEYSVFLIAAVSITSAYQF). Topologically, residues 99-107 (CQCDAKTPD) are cytoplasmic. The helical transmembrane segment at 108–128 (HFFKGFPCYWNITILYMFIFN) threads the bilayer. Position 129 (Thr129) is a topological domain, periplasmic. Residues 130 to 149 (SAATNAIILIILSILIFVPV) form a helical membrane-spanning segment. At 150-164 (KYVYPSRLDYLTESR) the chain is on the cytoplasmic side. A helical transmembrane segment spans residues 165–185 (ILKILMHICSIIYAVSSICIL). Over 186 to 191 (ISYPNT) the chain is Periplasmic. A helical membrane pass occupies residues 192 to 212 (NIICLSLSVAYVGMYLFLSFY). Topologically, residues 213–217 (RTYYP) are cytoplasmic.

Belongs to the CDP-alcohol phosphatidyltransferase class-I family. The cofactor is Mn(2+).

The protein localises to the cell inner membrane. The enzyme catalyses a CDP-1,2-diacyl-sn-glycerol + choline = a 1,2-diacyl-sn-glycero-3-phosphocholine + CMP + H(+). Condenses choline with CDP-diglyceride to produce phosphatidylcholine and CMP. This Legionella bozemanae (Fluoribacter bozemanae) protein is Phosphatidylcholine synthase.